The chain runs to 255 residues: Triosephosphate isomerase (255 aa).

Substrate is bound at residue 15–17; the sequence is NWK. Histidine 100 acts as the Electrophile in catalysis. Glutamate 172 serves as the catalytic Proton acceptor. Substrate contacts are provided by residues glycine 178, serine 218, and 239–240; that span reads GG.

This sequence belongs to the triosephosphate isomerase family. In terms of assembly, homodimer.

It localises to the cytoplasm. It carries out the reaction D-glyceraldehyde 3-phosphate = dihydroxyacetone phosphate. Its pathway is carbohydrate biosynthesis; gluconeogenesis. It functions in the pathway carbohydrate degradation; glycolysis; D-glyceraldehyde 3-phosphate from glycerone phosphate: step 1/1. Involved in the gluconeogenesis. Catalyzes stereospecifically the conversion of dihydroxyacetone phosphate (DHAP) to D-glyceraldehyde-3-phosphate (G3P). This is Triosephosphate isomerase from Clostridium tetani (strain Massachusetts / E88).